A 1335-amino-acid polypeptide reads, in one-letter code: MAKKFNYKLPSMVALTLFGTAFTAHQANAAEQPQNQSNHKNVLDDQTALKQAEKAKSEVTQSTTNVSGTQTYQDPTQVQPKQDTQSTTYDASLDEMSTYNEISSNQKQQSLSTDDANQNQTNSVTKNQQEETNDLTQEDKTSTDTNQLQETQSVAKENEKDLGANANNEQQDKKMTASQPSENQAIETQTASNDNESQQKSQQVTSEQNETATPKVSNTNASGYNFDYDDEDDDSSTDHLEPISLNNVNATSKQTTSYKYKEPAQRVTTNTVKKETASNQATIDTKQFTPFSATAQPRTVYSVSSQKTSSLPKYTPKVNSSINNYIRKKNMKAPRIEEDYTSYFPKYGYRNGVGRPEGIVVHDTANDNSTIDGEIAFMKRNYTNAFVHAFVDGNRIIETAPTDYLSWGAGPYGNQRFINVEIVHTHDYDSFARSMNNYADYAATQLQYYNLKPDSAENDGRGTVWTHAAISNFLGGTDHADPHQYLRSHNYSYAELYDLIYEKYLIKTKQVAPWGTTSTKPSQPSKPSGGTNNKLTVSANRGVAQIKPTNNGLYTTVYDSKGHKTDQVQKTLSVTKTATLGNNKFYLVEDYNSGKKYGWVKQGDVVYNTAKAPVKVNQTYNVKAGSTLYTVPWGTPKQVASKVSGTGNQTFKATKQQQIDKATYLYGTVNGKSGWISKYYLTTASKPSNPTKPSTNNQLTVTNNSGVAQINAKNSGLYTTVYDTKGKTTNQIQRTLSVTKAATLGDKKFYLVGDYNTGTNYGWVKQDEVIYNTAKSPVKINQTYNVKPGVKLHTVPWGTYNQVAGTVSGKGDQTFKATKQQQIDKATYLYGTVNGKSGWISKYYLTAPSKVQALSTQSTPAPKQVKPSTQTVNQIAQVKANNSGIRASVYDKTAKSGTKYANRTFLINKQRTQGNNTYVLLQDGTSNTPLGWVNINDVTTQNIGKQTQSIGKYSVKPTNNGLYSIAWGTKNQQLLAPNTLANQAFNASKAVYVGKDLYLYGTVNNRTGWIAAKDLIQNSTDAQSTPYNYTFVINNSKSYFYMDPTKANRYSLKPYYEQTFTVIKQKNINGVKWYYGQLLDGKYVWIKSTDLVKEKIKYAYTGMTLNNAINIQSRLKYKPQVQNEPLKWSNANYSQIKNAMDTKRLANDSSLKYQFLRLDQPQYLSAQALNKLLKGKGVLENQGAAFSQAARKYGLNEIYLISHALVETGNGTSQLAKGGDVSKGKFTTKTGHKYHNVFGIGAFDNNALVDGIKYAKNAGWTSVSKAIIGGAKFIGNSYVKAGQNTLYKMRWNPANPGTHQYATDINWANVNAQVLKQFYDKIGEVGKYFEIPTYK.

Residues 1–29 (MAKKFNYKLPSMVALTLFGTAFTAHQANA) form the signal peptide. 3 disordered regions span residues 51–88 (QAEKAKSEVTQSTTNVSGTQTYQDPTQVQPKQDTQSTT), 100–262 (NEIS…KYKE), and 514–535 (WGTTSTKPSQPSKPSGGTNNKL). Composition is skewed to polar residues over residues 58–88 (EVTQSTTNVSGTQTYQDPTQVQPKQDTQSTT), 100–127 (NEISSNQKQQSLSTDDANQNQTNSVTKN), 143–155 (TDTNQLQETQSVA), 176–223 (TASQ…NASG), and 244–258 (SLNNVNATSKQTTSY). Residues 303–863 (VSSQKTSSLP…LSTQSTPAPK (561 aa)) are N-acetylmuramoyl-L-alanine amidase. Residues 515 to 531 (GTTSTKPSQPSKPSGGT) show a composition bias toward low complexity. 7 consecutive GW domains span residues 533–610 (NKLT…YNTA), 612–686 (APVK…TASK), 700–774 (TVTN…YNTA), 776–850 (SPVK…APSK), 868–943 (STQT…TQNI), 945–1020 (KQTQ…QNST), and 1023–1096 (QSTP…KEKI). Residues 864 to 1335 (QVKPSTQTVN…GKYFEIPTYK (472 aa)) are endo-beta-N-acetylglucosaminidase.

It in the N-terminal section; belongs to the N-acetylmuramoyl-L-alanine amidase 2 family. In the C-terminal section; belongs to the glycosyl hydrolase 73 family. As to quaternary structure, oligomer; forms a ring structure at the cell surface which is important for efficient partitioning of daughter cells after cell division. In terms of processing, undergoes proteolytic processing to generate the two extracellular lytic enzymes, probably at the septal region on the cell surface.

Its subcellular location is the secreted. The enzyme catalyses Hydrolyzes the link between N-acetylmuramoyl residues and L-amino acid residues in certain cell-wall glycopeptides.. It catalyses the reaction an N(4)-(oligosaccharide-(1-&gt;3)-[oligosaccharide-(1-&gt;6)]-beta-D-Man-(1-&gt;4)-beta-D-GlcNAc-(1-&gt;4)-alpha-D-GlcNAc)-L-asparaginyl-[protein] + H2O = an oligosaccharide-(1-&gt;3)-[oligosaccharide-(1-&gt;6)]-beta-D-Man-(1-&gt;4)-D-GlcNAc + N(4)-(N-acetyl-beta-D-glucosaminyl)-L-asparaginyl-[protein]. In terms of biological role, endohydrolysis of the di-N-acetylchitobiosyl unit in high-mannose glycopeptides and glycoproteins containing the -[(Man)5(GlcNAc)2]-Asn structure. One N-acetyl-D-glucosamine residue remains attached to the protein; the rest of the oligosaccharide is released intact. Cleaves the peptidoglycan connecting the daughter cells at the end of the cell division cycle, resulting in the separation of the two newly divided cells. Acts as an autolysin in penicillin-induced lysis. As a bacterial surface-associated protein, mediates attachment to polystyrene surfaces, contributing to biofilm formation. Also has vitronectin-binding activity. The chain is Bifunctional autolysin (atl) from Staphylococcus epidermidis.